The following is a 377-amino-acid chain: Succinyl-diaminopimelate desuccinylase (377 aa).

His-67 lines the Zn(2+) pocket. Residue Asp-69 is part of the active site. Asp-100 contacts Zn(2+). Residue Glu-134 is the Proton acceptor of the active site. The Zn(2+) site is built by Glu-135, Glu-163, and His-349.

This sequence belongs to the peptidase M20A family. DapE subfamily. Homodimer. Requires Zn(2+) as cofactor. Co(2+) is required as a cofactor.

The catalysed reaction is N-succinyl-(2S,6S)-2,6-diaminopimelate + H2O = (2S,6S)-2,6-diaminopimelate + succinate. The protein operates within amino-acid biosynthesis; L-lysine biosynthesis via DAP pathway; LL-2,6-diaminopimelate from (S)-tetrahydrodipicolinate (succinylase route): step 3/3. Functionally, catalyzes the hydrolysis of N-succinyl-L,L-diaminopimelic acid (SDAP), forming succinate and LL-2,6-diaminopimelate (DAP), an intermediate involved in the bacterial biosynthesis of lysine and meso-diaminopimelic acid, an essential component of bacterial cell walls. The protein is Succinyl-diaminopimelate desuccinylase of Haemophilus influenzae (strain PittGG).